Consider the following 323-residue polypeptide: Methionyl-tRNA formyltransferase (323 aa).

Residue 118 to 121 participates in (6S)-5,6,7,8-tetrahydrofolate binding; that stretch reads SLLP.

It belongs to the Fmt family.

It catalyses the reaction L-methionyl-tRNA(fMet) + (6R)-10-formyltetrahydrofolate = N-formyl-L-methionyl-tRNA(fMet) + (6S)-5,6,7,8-tetrahydrofolate + H(+). Its function is as follows. Attaches a formyl group to the free amino group of methionyl-tRNA(fMet). The formyl group appears to play a dual role in the initiator identity of N-formylmethionyl-tRNA by promoting its recognition by IF2 and preventing the misappropriation of this tRNA by the elongation apparatus. This Buchnera aphidicola subsp. Baizongia pistaciae (strain Bp) protein is Methionyl-tRNA formyltransferase.